A 545-amino-acid polypeptide reads, in one-letter code: Chaperonin GroEL (545 aa).

Residues 29–32 (TLGP), Lys50, 86–90 (DGTTT), Gly415, and Asp495 each bind ATP.

It belongs to the chaperonin (HSP60) family. As to quaternary structure, forms a cylinder of 14 subunits composed of two heptameric rings stacked back-to-back. Interacts with the co-chaperonin GroES.

It localises to the cytoplasm. The catalysed reaction is ATP + H2O + a folded polypeptide = ADP + phosphate + an unfolded polypeptide.. In terms of biological role, together with its co-chaperonin GroES, plays an essential role in assisting protein folding. The GroEL-GroES system forms a nano-cage that allows encapsulation of the non-native substrate proteins and provides a physical environment optimized to promote and accelerate protein folding. The protein is Chaperonin GroEL of Bacteroides fragilis (strain ATCC 25285 / DSM 2151 / CCUG 4856 / JCM 11019 / LMG 10263 / NCTC 9343 / Onslow / VPI 2553 / EN-2).